The sequence spans 84 residues: Beta-defensin 119 (84 aa).

A signal peptide spans 1-21; that stretch reads MKFLFLFLAILLATEVPVISG. 3 disulfides stabilise this stretch: Cys28–Cys55, Cys35–Cys49, and Cys39–Cys56.

The protein belongs to the beta-defensin family. Abundant expression in the male reproductive tract only. Expressed abundantly in testis, while expression in epididymis decreased gradually from caput to cauda.

It is found in the secreted. Has antibacterial activity. This chain is Beta-defensin 119 (DEFB119), found in Macaca mulatta (Rhesus macaque).